We begin with the raw amino-acid sequence, 187 residues long: uncharacterized protein (187 aa).

Helical transmembrane passes span 29-50 (IFIDIFIGVWAFILAVVWVYWI), 70-92 (FVIGYFLTFVIVAWLTSAAINAY), 128-147 (IFFALTFFSIGVISDFSVLR), and 154-176 (LALVYFVCLFGFIIWIGLAISYL).

Its subcellular location is the cell membrane. This is an uncharacterized protein from Archaeoglobus fulgidus (strain ATCC 49558 / DSM 4304 / JCM 9628 / NBRC 100126 / VC-16).